The sequence spans 78 residues: MQFKKQLMVIFLAYFLVVNESEAFFGHLFKLATKIIPSLFRRKNQRSRSIMKRDLENLFDPYQRNLELDRLLKQLPNY.

The signal sequence occupies residues 1 to 23 (MQFKKQLMVIFLAYFLVVNESEA). Residue R41 is modified to Arginine amide. A propeptide spanning residues 42–78 (RKNQRSRSIMKRDLENLFDPYQRNLELDRLLKQLPNY) is cleaved from the precursor.

Belongs to the non-disulfide-bridged peptide (NDBP) superfamily. Medium-length antimicrobial peptide (group 3) family. As to expression, expressed by the venom gland.

It localises to the secreted. It is found in the target cell membrane. Its function is as follows. Antimicrobial peptide with potent activity against bacteria. Acts by fastly disrupting the bacterial membrane. Shows activity against Gram-positive bacteria S.aureus (MIC=1.5-2.9 uM) and S.epidermidis (MIC=2.9 uM), M.luteus (MIC=23.4 uM), B.thuringiensis (MIC=2.9 uM), B.subtilis (MIC=2.9 uM) and Gram-negative bacteria E.coli (MIC=5.9-11.7 uM) and P.aeruginosa (MIC=5.9 uM), as well as against penicillin (MIC=2.9 uM) and methicillin (MIC=1.5-2.9 uM) resistant bacteria. Antibiotic activity is not affected by major negatively charged components of the prokaryotic cell wall (e.g. lipopolysaccharides and lipoteichoic acid). In vivo, in a mouse model of lethal peritonitis, shows potent antibiotic activity without cytotoxicity, improving the survival rate. The chain is Antimicrobial peptide marcin-18 from Olivierus martensii (Manchurian scorpion).